We begin with the raw amino-acid sequence, 160 residues long: MD-2-related lipid-recognition protein ROSY1 (160 aa).

Residues 1-23 (MAISHTQLLLLLLVSLFFSPALC) form the signal peptide.

As to quaternary structure, interacts with SYT1. As to expression, expressed exclusively in roots, in epidermis and cortex cells of the root elongation zone, and lateral root cap cells at the root tip.

The protein resides in the cytoplasm. In terms of biological role, involved in the regulation of gravitropic response and basipetal auxin transport in roots. Involved in salt stress tolerance. May facilitate membrane trafficking and asymmetric cell elongation via SYT1. Binds stigmasterol and dipalmitoyl phosphoethanolamine (DPPE) in vitro. The polypeptide is MD-2-related lipid-recognition protein ROSY1 (Arabidopsis thaliana (Mouse-ear cress)).